Here is a 986-residue protein sequence, read N- to C-terminus: DNA polymerase I (986 aa).

The region spanning 1-303 (MFMSAKSPLL…RTFIDKIQAF (303 aa)) is the 5'-3' exonuclease domain. The region spanning 304–592 (HRNFSDNQSP…MEDRGIRIDC (289 aa)) is the 3'-5' exonuclease domain. Positions 308–327 (SDNQSPVPMGNEADNGEPKK) are disordered. A polymerase region spans residues 593–986 (DYLQTLSQQL…HRGSNWMEAK (394 aa)).

Belongs to the DNA polymerase type-A family. Single-chain monomer with multiple functions.

The enzyme catalyses DNA(n) + a 2'-deoxyribonucleoside 5'-triphosphate = DNA(n+1) + diphosphate. Functionally, in addition to polymerase activity, this DNA polymerase exhibits 3'-5' and 5'-3' exonuclease activity. In Synechocystis sp. (strain ATCC 27184 / PCC 6803 / Kazusa), this protein is DNA polymerase I (polA).